A 1253-amino-acid polypeptide reads, in one-letter code: Cytoplasmic FMR1-interacting protein 2 (1253 aa).

N6-acetyllysine is present on K1037.

This sequence belongs to the CYFIP family. As to quaternary structure, component of the WAVE1 complex composed of ABI2, CYFIP2, BRK1, NCKAP1 and WASF1/WAVE1. Interacts with RAC1 (activated form) which causes the complex to dissociate, releasing activated WASF1. The complex can also be activated by NCK1. Interacts with SHANK3; the interaction mediates the association of SHANK3 with the WAVE1 complex. Interacts with FMR1; the interaction occurs in a RNA-dependent manner. Interacts with FXR1 and FXR2. Interacts with TMEM108 (via N-terminus); the interaction associates TMEM108 with the WAVE1 complex.

It localises to the cytoplasm. Its subcellular location is the nucleus. The protein localises to the perinuclear region. The protein resides in the synapse. It is found in the synaptosome. In terms of biological role, involved in T-cell adhesion and p53-dependent induction of apoptosis. Does not bind RNA. As component of the WAVE1 complex, required for BDNF-NTRK2 endocytic trafficking and signaling from early endosomes. The sequence is that of Cytoplasmic FMR1-interacting protein 2 from Pongo abelii (Sumatran orangutan).